Here is a 505-residue protein sequence, read N- to C-terminus: MGETLGDSPIDPESDSFTDTLSANISQEITMVDTEMPFWPTNFGISSVDLSVMDDHSHSFDIKPFTTVDFSSISAPHYEDIPFTRTDPMVADYKYDLKLQEYQSAIKVEPASPPYYSEKTQLYNKPHEEPSNSLMAIECRVCGDKASGFHYGVHACEGCKGFFRRTIRLKLIYDRCDLNCRIHKKSRNKCQYCRFQKCLAVGMSHNAIRFGRMPQAEKEKLLAEISSDIDQLNPESADLRALAKHLYDSYIKSFPLTKAKARAILTGKTTDKSPFVIYDMNSLMMGEDKIKFKHITPLQEQSKEVAIRIFQGCQFRSVEAVQEITEYAKSIPGFVNLDLNDQVTLLKYGVHEIIYTMLASLMNKDGVLISEGQGFMTREFLKSLRKPFGDFMEPKFEFAVKFNALELDDSDLAIFIAVIILSGDRPGLLNVKPIEDIQDNLLQALELQLKLNHPESSQLFAKLLQKMTDLRQIVTEHVQLLQVIKKTETDMSLHPLLQEIYKDLY.

Thr-84 carries an O-linked (GlcNAc) threonine glycan. Ser-112 bears the Phosphoserine; by MAPK mark. Residues 136-210 constitute a DNA-binding region (nuclear receptor); sequence AIECRVCGDK…VGMSHNAIRF (75 aa). 2 consecutive NR C4-type zinc fingers follow at residues 139–159 and 176–198; these read CRVC…CEGC and CDLN…FQKC. Residues 205–280 form an interaction with FAM120B region; sequence HNAIRFGRMP…DKSPFVIYDM (76 aa). Residues 238-503 enclose the NR LBD domain; the sequence is DLRALAKHLY…HPLLQEIYKD (266 aa). Residue Lys-252 forms a Glycyl lysine isopeptide (Lys-Gly) (interchain with G-Cter in ubiquitin) linkage. The 9aaTAD motif lies at 495-503; that stretch reads PLLQEIYKD.

This sequence belongs to the nuclear hormone receptor family. NR1 subfamily. In terms of assembly, interacts with FOXO1 (acetylated form). Heterodimer with other nuclear receptors, such as RXRA. The heterodimer with the retinoic acid receptor RXRA is called adipocyte-specific transcription factor ARF6. Interacts with NCOA6 coactivator, leading to a strong increase in transcription of target genes. Interacts with coactivator PPARBP, leading to a mild increase in transcription of target genes. Interacts with NOCA7 in a ligand-inducible manner. Interacts with NCOA1 and NCOA2 LXXLL motifs. Interacts with ASXL1, ASXL2, DNTTIP2, FAM120B, MAP2K1/MEK1, NR0B2, PDPK1, PRDM16, PRMT2 and TGFB1I1. Interacts (when activated by agonist) with PPP5C. Interacts with HELZ2 and THRAP3; the interaction stimulates the transcriptional activity of PPARG. Interacts with PER2, the interaction is ligand dependent and blocks PPARG recruitment to target promoters. Interacts with NOCT. Interacts with ACTN4. Interacts (when in the liganded conformation) with GPS2. Interacts with CRY1 and CRY2 in a ligand-dependent manner. In the absence of hormonal ligand, interacts with TACC1. In macrophages, interacts with PAQR3 and STUB1; the interactions promote PPARG poylubiquitination and STUB1-mediated degradation. O-GlcNAcylation at Thr-84 reduces transcriptional activity in adipocytes. Post-translationally, phosphorylated at basal conditions and dephosphorylated when treated with the ligand. May be dephosphorylated by PPP5C. The phosphorylated form may be inactive and dephosphorylation induces adipogenic activity. In terms of processing, ubiquitinated by E3 ubiquitin-protein ligase complex containing FBXO9; leading to proteasomal degradation. Ubiquitinated at Lys-252 by TRIM55 leading to proteasomal degradation. Ubiquitinated by E3 ubiquitin-protein ligase STUB1/CHIP; leading to proteasomal degradation. In terms of tissue distribution, highest expression in adipose tissue. Lower in liver, heart, kidney, stomach, duodenum and colon.

The protein resides in the nucleus. It localises to the cytoplasm. With respect to regulation, PDPK1 activates its transcriptional activity independently of its kinase activity. Nuclear receptor that binds peroxisome proliferators such as hypolipidemic drugs and fatty acids. Once activated by a ligand, the nuclear receptor binds to DNA specific PPAR response elements (PPRE) and modulates the transcription of its target genes, such as acyl-CoA oxidase. It therefore controls the peroxisomal beta-oxidation pathway of fatty acids. Key regulator of adipocyte differentiation and glucose homeostasis. ARF6 acts as a key regulator of the tissue-specific adipocyte P2 (aP2) enhancer. Acts as a critical regulator of gut homeostasis by suppressing NF-kappa-B-mediated pro-inflammatory responses. Plays a role in the regulation of cardiovascular circadian rhythms by regulating the transcription of BMAL1 in the blood vessels. This Macaca mulatta (Rhesus macaque) protein is Peroxisome proliferator-activated receptor gamma (PPARG).